The primary structure comprises 415 residues: Peptide chain release factor subunit 1 (415 aa).

Belongs to the eukaryotic release factor 1 family. As to quaternary structure, heterodimer of two subunits, one of which binds GTP.

The protein localises to the cytoplasm. In terms of biological role, directs the termination of nascent peptide synthesis (translation) in response to the termination codons UAA, UAG and UGA. The protein is Peptide chain release factor subunit 1 of Thermococcus kodakarensis (strain ATCC BAA-918 / JCM 12380 / KOD1) (Pyrococcus kodakaraensis (strain KOD1)).